The sequence spans 453 residues: tRNA-2-methylthio-N(6)-dimethylallyladenosine synthase (453 aa).

Positions 7-123 (GTYWITTFGC…LDTLLSQVEA (117 aa)) constitute an MTTase N-terminal domain. The [4Fe-4S] cluster site is built by Cys16, Cys52, Cys86, Cys158, Cys162, and Cys165. Positions 144–381 (RDSSLCAWVN…NALVERKAKA (238 aa)) constitute a Radical SAM core domain. A TRAM domain is found at 384-447 (QRYLGRVEEV…AFSLSGSAQA (64 aa)).

This sequence belongs to the methylthiotransferase family. MiaB subfamily. As to quaternary structure, monomer. Requires [4Fe-4S] cluster as cofactor.

The protein localises to the cytoplasm. It catalyses the reaction N(6)-dimethylallyladenosine(37) in tRNA + (sulfur carrier)-SH + AH2 + 2 S-adenosyl-L-methionine = 2-methylsulfanyl-N(6)-dimethylallyladenosine(37) in tRNA + (sulfur carrier)-H + 5'-deoxyadenosine + L-methionine + A + S-adenosyl-L-homocysteine + 2 H(+). In terms of biological role, catalyzes the methylthiolation of N6-(dimethylallyl)adenosine (i(6)A), leading to the formation of 2-methylthio-N6-(dimethylallyl)adenosine (ms(2)i(6)A) at position 37 in tRNAs that read codons beginning with uridine. The polypeptide is tRNA-2-methylthio-N(6)-dimethylallyladenosine synthase (Synechococcus sp. (strain RCC307)).